A 453-amino-acid polypeptide reads, in one-letter code: Tyrosine-protein phosphatase non-receptor type 18 (453 aa).

In terms of domain architecture, Tyrosine-protein phosphatase spans 26–291; that stretch reads LAREFSDIKA…RFLYHTVAQL (266 aa). Substrate-binding positions include D197, 229–235, and Q276; that span reads CSAGCGR. The Phosphocysteine intermediate role is filled by C229. Residues Y381 and Y419 each carry the phosphotyrosine modification. Residues 384-453 form a disordered region; that stretch reads VAPRAQRPVA…RDPPAEWTRV (70 aa). Basic and acidic residues predominate over residues 442-453; it reads GPRDPPAEWTRV.

It belongs to the protein-tyrosine phosphatase family. Non-receptor class 4 subfamily. As to quaternary structure, interacts with PSTPIP1. As to expression, highest expression in bone marrow. Also expressed in kidney, lung, ovary, spleen, thymus and lymph node.

It is found in the nucleus. It localises to the cytoplasm. The enzyme catalyses O-phospho-L-tyrosyl-[protein] + H2O = L-tyrosyl-[protein] + phosphate. In terms of biological role, may be involved in growth and differentiation of hematopoietic cells. The sequence is that of Tyrosine-protein phosphatase non-receptor type 18 (Ptpn18) from Mus musculus (Mouse).